Here is a 624-residue protein sequence, read N- to C-terminus: Glycosyltransferase AglD (624 aa).

The active site involves Asp201. The next 8 membrane-spanning stretches (helical) occupy residues 260-280 (VTIV…TLYI), 285-305 (VISV…VIYV), 381-401 (LLTI…TGGL), 427-447 (AAYV…GIAL), 496-518 (VGLT…LLAL), 532-552 (FFAV…GGVG), 556-576 (IAFT…ALAA), and 587-607 (VTIV…TTAV).

This sequence belongs to the glycosyltransferase 2 family.

It is found in the cell membrane. It functions in the pathway cell surface structure biogenesis; S-layer biogenesis. Functionally, involved in the assembly of a N-linked pentasaccharide that decorates the S-layer glycoprotein and flagellins. Catalyzes the addition of the mannose found at position 5 of the pentasaccharide to its own distinct dolichol phosphate carrier. The polypeptide is Glycosyltransferase AglD (aglD) (Haloferax volcanii (strain ATCC 29605 / DSM 3757 / JCM 8879 / NBRC 14742 / NCIMB 2012 / VKM B-1768 / DS2) (Halobacterium volcanii)).